The following is a 632-amino-acid chain: Arginine--tRNA ligase (632 aa).

Positions 120-130 match the 'HIGH' region motif; sequence ANPIHPLHIGH.

Belongs to the class-I aminoacyl-tRNA synthetase family.

The protein localises to the cytoplasm. The catalysed reaction is tRNA(Arg) + L-arginine + ATP = L-arginyl-tRNA(Arg) + AMP + diphosphate. The sequence is that of Arginine--tRNA ligase from Pyrobaculum islandicum (strain DSM 4184 / JCM 9189 / GEO3).